We begin with the raw amino-acid sequence, 53 residues long: MLRYAVIFFIIAIVAAVFGFGGIAAGAAEIAKILFYIFVVIFLVTLLLGVVRR.

Transmembrane regions (helical) follow at residues 5–25 (AVIFFIIAIVAAVFGFGGIAA) and 30–50 (IAKILFYIFVVIFLVTLLLGV).

Belongs to the UPF0391 family.

The protein resides in the cell membrane. This Burkholderia lata (strain ATCC 17760 / DSM 23089 / LMG 22485 / NCIMB 9086 / R18194 / 383) protein is UPF0391 membrane protein Bcep18194_C7021.